A 648-amino-acid polypeptide reads, in one-letter code: Cysteine-rich receptor-like protein kinase 38 (648 aa).

Residues 1–25 (MKNSAAIFLTSSLILLLQTLHGVKA) form the signal peptide. Gnk2-homologous domains are found at residues 26 to 127 (GFIC…DQST) and 140 to 247 (PSPV…FYPF). The Extracellular portion of the chain corresponds to 26–278 (GFICVGSSFP…EAISITRLKG (253 aa)). Asparagine 37, asparagine 63, asparagine 151, asparagine 174, and asparagine 253 each carry an N-linked (GlcNAc...) asparagine glycan. A helical transmembrane segment spans residues 279–299 (GIIAIFVVPIVINLLVFIGLI). Over 300-648 (RAYTRIRKSY…ELSITELSPR (349 aa)) the chain is Cytoplasmic. Residues 339-611 (FSFENKIGQG…VIQWLGSETI (273 aa)) enclose the Protein kinase domain. Residues 345 to 353 (IGQGGFGSV) and lysine 367 contribute to the ATP site. A Phosphotyrosine modification is found at tyrosine 412. Aspartate 464 (proton acceptor) is an active-site residue. Residue serine 468 is modified to Phosphoserine. Threonine 504 is modified (phosphothreonine). Tyrosine 512 bears the Phosphotyrosine mark.

It belongs to the protein kinase superfamily. Ser/Thr protein kinase family. CRK subfamily.

The protein localises to the membrane. The catalysed reaction is L-seryl-[protein] + ATP = O-phospho-L-seryl-[protein] + ADP + H(+). The enzyme catalyses L-threonyl-[protein] + ATP = O-phospho-L-threonyl-[protein] + ADP + H(+). In Arabidopsis thaliana (Mouse-ear cress), this protein is Cysteine-rich receptor-like protein kinase 38 (CRK38).